Here is a 343-residue protein sequence, read N- to C-terminus: Methionine import ATP-binding protein MetN 1 (343 aa).

An ABC transporter domain is found at 2–241 (IKLTHISKVF…PKTPLAQQFI (240 aa)). 38–45 (GASGAGKS) serves as a coordination point for ATP.

This sequence belongs to the ABC transporter superfamily. Methionine importer (TC 3.A.1.24) family. In terms of assembly, the complex is composed of two ATP-binding proteins (MetN), two transmembrane proteins (MetI) and a solute-binding protein (MetQ).

Its subcellular location is the cell inner membrane. It catalyses the reaction L-methionine(out) + ATP + H2O = L-methionine(in) + ADP + phosphate + H(+). The enzyme catalyses D-methionine(out) + ATP + H2O = D-methionine(in) + ADP + phosphate + H(+). Functionally, part of the ABC transporter complex MetNIQ involved in methionine import. Responsible for energy coupling to the transport system. This chain is Methionine import ATP-binding protein MetN 1, found in Yersinia pestis bv. Antiqua (strain Antiqua).